The primary structure comprises 122 residues: Large ribosomal subunit protein uL14 (122 aa).

The protein belongs to the universal ribosomal protein uL14 family. In terms of assembly, part of the 50S ribosomal subunit. Forms a cluster with proteins L3 and L19. In the 70S ribosome, L14 and L19 interact and together make contacts with the 16S rRNA in bridges B5 and B8.

In terms of biological role, binds to 23S rRNA. Forms part of two intersubunit bridges in the 70S ribosome. In Limosilactobacillus reuteri (strain DSM 20016) (Lactobacillus reuteri), this protein is Large ribosomal subunit protein uL14.